The sequence spans 178 residues: Endothelin-2 (178 aa).

The signal sequence occupies residues 1-24 (MVSVPTAWCSVALALLVALHEGKD). Positions 25-46 (QAAATLEQPASSPRARAAHLRL) are excised as a propeptide. 2 disulfide bridges follow: cysteine 49/cysteine 63 and cysteine 51/cysteine 59. A propeptide spanning residues 70–178 (VNTPGQTAPY…RTTHSRHRKR (109 aa)) is cleaved from the precursor. Positions 96–111 (CECSSARDPACATFCH) are endothelin-like. A disordered region spans residues 154 to 178 (KTHFAKRQQEATREPRTTHSRHRKR). Basic and acidic residues predominate over residues 160–170 (RQQEATREPRT).

The protein belongs to the endothelin/sarafotoxin family.

Its subcellular location is the secreted. In terms of biological role, endothelins are endothelium-derived vasoconstrictor peptides. The polypeptide is Endothelin-2 (EDN2) (Oryctolagus cuniculus (Rabbit)).